The primary structure comprises 255 residues: Phosphate import ATP-binding protein PstB (255 aa).

The ABC transporter domain occupies 9 to 250; the sequence is IAVQNLNFYY…PKIQRTEDYI (242 aa). 41-48 contributes to the ATP binding site; sequence GPSGCGKS.

This sequence belongs to the ABC transporter superfamily. Phosphate importer (TC 3.A.1.7) family. As to quaternary structure, the complex is composed of two ATP-binding proteins (PstB), two transmembrane proteins (PstC and PstA) and a solute-binding protein (PstS).

The protein resides in the cell inner membrane. The catalysed reaction is phosphate(out) + ATP + H2O = ADP + 2 phosphate(in) + H(+). Functionally, part of the ABC transporter complex PstSACB involved in phosphate import. Responsible for energy coupling to the transport system. In Haemophilus influenzae (strain 86-028NP), this protein is Phosphate import ATP-binding protein PstB.